The primary structure comprises 201 residues: Protein GrpE (201 aa).

Polar residues predominate over residues 1 to 11; sequence MTDSTNNQGTS. The segment at 1–40 is disordered; sequence MTDSTNNQGTSGRPDDDHTTEEVASVFNDPGAQAPAGEPD.

The protein belongs to the GrpE family. In terms of assembly, homodimer.

Its subcellular location is the cytoplasm. Participates actively in the response to hyperosmotic and heat shock by preventing the aggregation of stress-denatured proteins, in association with DnaK and GrpE. It is the nucleotide exchange factor for DnaK and may function as a thermosensor. Unfolded proteins bind initially to DnaJ; upon interaction with the DnaJ-bound protein, DnaK hydrolyzes its bound ATP, resulting in the formation of a stable complex. GrpE releases ADP from DnaK; ATP binding to DnaK triggers the release of the substrate protein, thus completing the reaction cycle. Several rounds of ATP-dependent interactions between DnaJ, DnaK and GrpE are required for fully efficient folding. This Beijerinckia indica subsp. indica (strain ATCC 9039 / DSM 1715 / NCIMB 8712) protein is Protein GrpE.